We begin with the raw amino-acid sequence, 1038 residues long: Activated CDC42 kinase 1 (1038 aa).

Positions 1–110 are SAM-like domain; it reads MQPEEGTGWL…TSPAPGGPAG (110 aa). The segment at 90–114 is disordered; that stretch reads PPHHSQSTFRKTSPAPGGPAGEGPL. The region spanning 126-385 is the Protein kinase domain; that stretch reads LRLLEKLGDG…PTFVALRDFL (260 aa). Residues 132-140 and Lys-158 each bind ATP; that span reads LGDGSFGVV. Catalysis depends on Asp-252, which acts as the Proton acceptor. Tyr-284 is subject to Phosphotyrosine; by SRC and autocatalysis. The SH3 domain occupies 388 to 448; sequence AQPTDMRALQ…PRNVVTSVAG (61 aa). A CRIB domain is found at 454 to 466; sequence ISQPLQNSFIHTG. A disordered region spans residues 497 to 535; it reads LSVELSTSRPPQHLGGVKKPTYDPVSEDQDPLSSDFKRL. Tyr-518 bears the Phosphotyrosine mark. The required for interaction with SRC stretch occupies residues 623–652; that stretch reads DWDARPLPPPPAYDDVAQDEDDFEICSINS. Positions 632 to 635 are required for interaction with NEDD4; the sequence is PPAY. 2 disordered regions span residues 659–702 and 718–840; these read VPAG…SSAQ and LQAP…GPRA. At Ser-724 the chain carries Phosphoserine. Positions 733–876 are EBD domain; the sequence is GDDKPQVPPR…SYLERYQRFL (144 aa). Composition is skewed to pro residues over residues 738–749, 772–783, and 794–805; these read QVPPRVPIPPRP, PASPPRVPPREP, and PLVPPGSSPLPP. Tyr-827 is subject to Phosphotyrosine. At Arg-839 the chain carries Omega-N-methylarginine. Tyr-859 and Tyr-872 each carry phosphotyrosine. Ser-881 carries the phosphoserine modification. The segment at 917 to 957 is disordered; the sequence is LDPKANFSTNNSNPGARPPPPRATARLPQRGCPGDGPEAGR. The region spanning 958–996 is the UBA domain; sequence PADKIQMAMVHGVTTEECQAALQCHGWSVQRAAQYLKVE.

Belongs to the protein kinase superfamily. Tyr protein kinase family. Interacts with NEDD4 (via WW3 domain). NEDD4L and EGF promote association with NEDD4. Homodimer. Interacts with AR, CDC42, WWASL and WWOX. Interacts with CSPG4 (activated). Interacts with MERTK (activated); stimulates autophosphorylation. May interact (phosphorylated) with HSP90AB1; maintains kinase activity. Interacts with NPHP1. Interacts with SNX9 (via SH3 domain). Interacts with SRC (via SH2 and SH3 domain). Interacts with EGFR, and this interaction is dependent on EGF stimulation and kinase activity of EGFR. Interacts (via kinase domain) with AKT1. Part of a collagen stimulated complex involved in cell migration composed of CDC42, CRK, TNK2 and BCAR1/p130cas. Interacts with BCAR1/p130cas via SH3 domains. Forms complexes with GRB2 and numerous receptor tyrosine kinases (RTK) including LTK, AXL or PDGFRL, in which GRB2 promotes RTK recruitment by TNK2. Mg(2+) serves as cofactor. Post-translationally, autophosphorylation regulates kinase activity. Phosphorylation on Tyr-518 is required for interaction with SRC and is observed during association with clathrin-coated pits. In terms of processing, polyubiquitinated by NEDD4 and NEDD4L. Degradation can be induced by EGF and is lysosome-dependent. In terms of tissue distribution, the Tyr-284 phosphorylated form shows a significant increase in expression in breast cancers during the progressive stages i.e. normal to hyperplasia (ADH), ductal carcinoma in situ (DCIS), invasive ductal carcinoma (IDC) and lymph node metastatic (LNMM) stages. It also shows a significant increase in expression in prostate cancers during the progressive stages.

The protein resides in the cell membrane. The protein localises to the nucleus. Its subcellular location is the endosome. It is found in the cell junction. It localises to the adherens junction. The protein resides in the cytoplasmic vesicle membrane. The protein localises to the cytoplasmic vesicle. Its subcellular location is the clathrin-coated vesicle. It is found in the membrane. It localises to the clathrin-coated pit. The protein resides in the cytoplasm. The protein localises to the perinuclear region. Its subcellular location is the cytosol. The catalysed reaction is L-tyrosyl-[protein] + ATP = O-phospho-L-tyrosyl-[protein] + ADP + H(+). It catalyses the reaction L-seryl-[protein] + ATP = O-phospho-L-seryl-[protein] + ADP + H(+). It carries out the reaction L-threonyl-[protein] + ATP = O-phospho-L-threonyl-[protein] + ADP + H(+). Its activity is regulated as follows. Inhibited by AIM-100 (4-amino-5,6-biaryl-furo[2,3-d]pyrimidine), which suppresses activating phosphorylation at Tyr-284. Repressed by dasatinib. Functionally, non-receptor tyrosine-protein and serine/threonine-protein kinase that is implicated in cell spreading and migration, cell survival, cell growth and proliferation. Transduces extracellular signals to cytosolic and nuclear effectors. Phosphorylates AKT1, AR, MCF2, WASL and WWOX. Implicated in trafficking and clathrin-mediated endocytosis through binding to epidermal growth factor receptor (EGFR) and clathrin. Binds to both poly- and mono-ubiquitin and regulates ligand-induced degradation of EGFR, thereby contributing to the accumulation of EGFR at the limiting membrane of early endosomes. Downstream effector of CDC42 which mediates CDC42-dependent cell migration via phosphorylation of BCAR1. May be involved both in adult synaptic function and plasticity and in brain development. Activates AKT1 by phosphorylating it on 'Tyr-176'. Phosphorylates AR on 'Tyr-267' and 'Tyr-363' thereby promoting its recruitment to androgen-responsive enhancers (AREs). Phosphorylates WWOX on 'Tyr-287'. Phosphorylates MCF2, thereby enhancing its activity as a guanine nucleotide exchange factor (GEF) toward Rho family proteins. Contributes to the control of AXL receptor levels. Confers metastatic properties on cancer cells and promotes tumor growth by negatively regulating tumor suppressor such as WWOX and positively regulating pro-survival factors such as AKT1 and AR. Phosphorylates WASP. The chain is Activated CDC42 kinase 1 (TNK2) from Homo sapiens (Human).